The primary structure comprises 169 residues: Large ribosomal subunit protein uL5 (169 aa).

Belongs to the universal ribosomal protein uL5 family. As to quaternary structure, part of the 50S ribosomal subunit; contacts the 5S rRNA and probably tRNA. Forms a bridge to the 30S subunit in the 70S ribosome.

Its function is as follows. This is one of the proteins that bind and probably mediate the attachment of the 5S RNA into the large ribosomal subunit, where it forms part of the central protuberance. In the 70S ribosome it contacts protein S13 of the 30S subunit (bridge B1b), connecting the 2 subunits; this bridge is implicated in subunit movement. May contact the P site tRNA; the 5S rRNA and some of its associated proteins might help stabilize positioning of ribosome-bound tRNAs. The sequence is that of Large ribosomal subunit protein uL5 from Methanosarcina barkeri (strain Fusaro / DSM 804).